The chain runs to 247 residues: 3-deoxy-manno-octulosonate cytidylyltransferase (247 aa).

This sequence belongs to the KdsB family.

It localises to the cytoplasm. The catalysed reaction is 3-deoxy-alpha-D-manno-oct-2-ulosonate + CTP = CMP-3-deoxy-beta-D-manno-octulosonate + diphosphate. It participates in nucleotide-sugar biosynthesis; CMP-3-deoxy-D-manno-octulosonate biosynthesis; CMP-3-deoxy-D-manno-octulosonate from 3-deoxy-D-manno-octulosonate and CTP: step 1/1. It functions in the pathway bacterial outer membrane biogenesis; lipopolysaccharide biosynthesis. Functionally, activates KDO (a required 8-carbon sugar) for incorporation into bacterial lipopolysaccharide in Gram-negative bacteria. In Methylorubrum populi (strain ATCC BAA-705 / NCIMB 13946 / BJ001) (Methylobacterium populi), this protein is 3-deoxy-manno-octulosonate cytidylyltransferase.